The following is a 396-amino-acid chain: Vacuolar protease A (396 aa).

Positions 1–17 are cleaved as a signal peptide; that stretch reads MKGALLTAAMLLGSAQA. A propeptide spans 18-70 (activation peptide); that stretch reads GVHTMKLKKVPLAEQLESVPIDVQVQHLGQKYTGLRTESHTQAMFKATDAQVS. The Peptidase A1 domain occupies 85-392; it reads YFSEITIGTP…DLGADTVGIA (308 aa). Residue D103 is part of the active site. C116 and C121 are disulfide-bonded. N-linked (GlcNAc...) asparagine glycosylation is present at N138. The active site involves D284. A disulfide bridge connects residues C318 and C351. N-linked (GlcNAc...) asparagine glycosylation is present at N335.

Belongs to the peptidase A1 family.

It is found in the vacuole. The protein is Vacuolar protease A (pep-4) of Neurospora crassa (strain ATCC 24698 / 74-OR23-1A / CBS 708.71 / DSM 1257 / FGSC 987).